A 431-amino-acid chain; its full sequence is Divergent protein kinase domain 1B (431 aa).

Topologically, residues 1-30 (MRRLRRLVHLVLLCPFSKGLQGRLPGLRVK) are cytoplasmic. Positions 5-6 (RR) match the May mediate ER retention motif. A helical transmembrane segment spans residues 31-51 (YVLLVWLGIFVGSWMVYVHYS). At 52-431 (SYSELCRGHV…WREISNTNYS (380 aa)) the chain is on the lumenal side. Intrachain disulfides connect Cys57-Cys94 and Cys62-Cys117.

This sequence belongs to the DIPK family. Among the many cysteines in the lumenal domain, most are probably involved in disulfide bonds.

It is found in the endoplasmic reticulum membrane. The protein is Divergent protein kinase domain 1B of Rattus norvegicus (Rat).